Here is a 212-residue protein sequence, read N- to C-terminus: Pyrrolidone-carboxylate peptidase (212 aa).

Residues Glu-78, Cys-141, and His-165 contribute to the active site.

Belongs to the peptidase C15 family. As to quaternary structure, homotetramer.

It is found in the cytoplasm. It catalyses the reaction Release of an N-terminal pyroglutamyl group from a polypeptide, the second amino acid generally not being Pro.. Functionally, removes 5-oxoproline from various penultimate amino acid residues except L-proline. This chain is Pyrrolidone-carboxylate peptidase, found in Staphylococcus aureus (strain bovine RF122 / ET3-1).